The chain runs to 265 residues: Probable aquaporin TIP3-2 (265 aa).

A run of 2 helical transmembrane segments spans residues 32–52 (LSEF…VYGL) and 62–82 (LGGL…AVAV). An NPA 1 motif is present at residues 92–94 (NPA). Helical transmembrane passes span 110 to 130 (AALY…LLRL), 151 to 171 (ALLL…ATAV), and 179 to 199 (DIAP…GGPF). Positions 205–207 (NPA) match the NPA 2 motif. The chain crosses the membrane as a helical span at residues 223-243 (WVYWLGPLIGAGMAGALYEFV).

This sequence belongs to the MIP/aquaporin (TC 1.A.8) family. TIP (TC 1.A.8.10) subfamily. In terms of tissue distribution, expressed in leaves and at lower levels in roots.

It is found in the vacuole membrane. In terms of biological role, aquaporins facilitate the transport of water and small neutral solutes across cell membranes. May be involved in transport from the vacuolar compartment to the cytoplasm. This chain is Probable aquaporin TIP3-2 (TIP3-2), found in Oryza sativa subsp. japonica (Rice).